The following is a 278-amino-acid chain: Large ribosomal subunit protein uL2 (278 aa).

The tract at residues 212–278 (NRHRGIRPQT…IISRKKHKKG (67 aa)) is disordered. The segment covering 257–278 (YKTRKKKASDKLIISRKKHKKG) has biased composition (basic residues).

Belongs to the universal ribosomal protein uL2 family. Part of the 50S ribosomal subunit. Forms a bridge to the 30S subunit in the 70S ribosome.

Its function is as follows. One of the primary rRNA binding proteins. Required for association of the 30S and 50S subunits to form the 70S ribosome, for tRNA binding and peptide bond formation. It has been suggested to have peptidyltransferase activity; this is somewhat controversial. Makes several contacts with the 16S rRNA in the 70S ribosome. This chain is Large ribosomal subunit protein uL2, found in Helicobacter pylori (strain Shi470).